A 25-amino-acid polypeptide reads, in one-letter code: Caerin 1.1 (25 aa).

At leucine 25 the chain carries Leucine amide.

As to expression, expressed by the skin dorsal glands.

Its subcellular location is the secreted. In terms of biological role, antibacterial peptide with wide spectrum of activity. Active against the Gram-positive bacteria B.cereus (MIC=50 ug/ml), E.faecalis (MIC=25 ug/ml), L.lactis (MIC=1.5 ug/ml), L.innocua (MIC=25 ug/ml), S.aureus (MIC=3 ug/ml), S.epidermidis (MIC=12 ug/ml) and S.uberis (MIC=12 ug/ml), and against the Gram-negative bacteria E.coli (MIC=100 ug/ml) and P.multocida (MIC=25 ug/ml). The sequence is that of Caerin 1.1 from Litoria peronii (Emerald spotted tree frog).